A 90-amino-acid chain; its full sequence is U7-theraphotoxin-Hhn1a 2 (90 aa).

A signal peptide spans 1-19 (MKIAIFTVVLALAVFAVLS). Residues 20-50 (FGWEANEKALSEEFTELIHEKEAASETEARE) constitute a propeptide that is removed on maturation. 3 disulfide bridges follow: Cys51/Cys65, Cys58/Cys70, and Cys64/Cys81.

It belongs to the neurotoxin 10 (Hwtx-1) family. 13 (Hntx-13) subfamily. Expressed by the venom gland.

It is found in the secreted. Its function is as follows. Ion channel inhibitor. This chain is U7-theraphotoxin-Hhn1a 2, found in Cyriopagopus hainanus (Chinese bird spider).